A 113-amino-acid chain; its full sequence is MTISAQVIDTIVEWIDDNLNQPLRIDDIARHAGYSKWHLQRLFMQYKGESLGRYVRERKLKLAARDLLDTDQKVYDICLKYGFDSQQTFTRIFTRTFNLPPGAYRKEKHGRTH.

Residues 9-107 form the HTH araC/xylS-type domain; that stretch reads DTIVEWIDDN…NLPPGAYRKE (99 aa). 2 consecutive DNA-binding regions (H-T-H motif) follow at residues 26 to 47 and 74 to 97; these read DDIA…MQYK and VYDI…TRTF.

In terms of biological role, transcriptional regulator. Binds to regulatory regions of target genes, including efflux pump operon acrAB and outer membrane protein gene tolC. Represses transcription of genes belonging to the flagellar regulon, including flhD, flhB and fliC; probably thereby leading to repression of motility. Represses expression of the flhDC operon in a post-transcriptional manner. Activates expression of acrAB, perhaps thereby conferring multidrug resistance. Involved in indole- and bile-mediated regulation of acrAB; binding of bile to RamA may contribute to activation of expression of acrAB. Plays a role in regulating virulence in mice. This chain is Transcriptional regulator RamA, found in Salmonella typhimurium (strain LT2 / SGSC1412 / ATCC 700720).